The following is a 267-amino-acid chain: L-aspartate dehydrogenase (267 aa).

NAD(+) contacts are provided by alanine 124 and asparagine 190. Residue histidine 218 is part of the active site.

The protein belongs to the L-aspartate dehydrogenase family.

It carries out the reaction L-aspartate + NADP(+) + H2O = oxaloacetate + NH4(+) + NADPH + H(+). The enzyme catalyses L-aspartate + NAD(+) + H2O = oxaloacetate + NH4(+) + NADH + H(+). It functions in the pathway cofactor biosynthesis; NAD(+) biosynthesis; iminoaspartate from L-aspartate (dehydrogenase route): step 1/1. Functionally, specifically catalyzes the NAD or NADP-dependent dehydrogenation of L-aspartate to iminoaspartate. This Methanococcus maripaludis (strain C6 / ATCC BAA-1332) protein is L-aspartate dehydrogenase.